The following is a 787-amino-acid chain: Integrin beta-3 (787 aa).

Positions 1 to 25 (MRTRRPGQLWATLLALGALAGVVVG) are cleaved as a signal peptide. Residues 27–717 (SNICTTRGVN…EEPECPKGPD (691 aa)) lie on the Extracellular side of the membrane. Residues 29 to 75 (ICTTRGVNSCQQCLAVSPVCAWCSDESLPQNSPRCNLKKNLLKDKCS) form the PSI domain. 19 disulfides stabilise this stretch: cysteine 30-cysteine 48, cysteine 38-cysteine 460, cysteine 41-cysteine 63, cysteine 51-cysteine 74, cysteine 202-cysteine 209, cysteine 257-cysteine 298, cysteine 399-cysteine 411, cysteine 431-cysteine 458, cysteine 462-cysteine 482, cysteine 473-cysteine 485, cysteine 487-cysteine 496, cysteine 498-cysteine 528, cysteine 511-cysteine 526, cysteine 520-cysteine 531, cysteine 533-cysteine 546, cysteine 548-cysteine 569, cysteine 553-cysteine 567, cysteine 561-cysteine 572, and cysteine 574-cysteine 583. The region spanning 134 to 376 (DYPVDIYYLM…QLIVDAYGKI (243 aa)) is the VWFA domain. Mg(2+) is bound by residues serine 146 and serine 148. Ca(2+) contacts are provided by serine 148, aspartate 151, aspartate 152, and aspartate 183. The CX3CL1-binding stretch occupies residues 202 to 209 (CYTMKSTC). The tract at residues 202 to 209 (CYTMKSTC) is involved in CX3CL1-, NRG1-, FGF1- and IGF1-binding. Ca(2+)-binding residues include asparagine 240, aspartate 242, proline 244, glutamate 245, and aspartate 276. Glutamate 245 serves as a coordination point for Mg(2+). A CX3CL1-binding region spans residues 292 to 312 (LPNDGRCHIGPDNHYSASTTM). 2 N-linked (GlcNAc...) asparagine glycosylation sites follow: asparagine 345 and asparagine 396. I-EGF domains follow at residues 462–497 (CQAFAQPLSPRCNNGNGTFECGVCRCDQGWLGSMCE), 498–547 (CSEE…KYCE), 548–584 (CDDFSCVRYKGEMCSGHGQCNCGDCVCDSDWTGYYCN), and 585–624 (CTTRTDTCMSTNGLLCSGRGNCECGSCVCVQPGSYGDTCE). Residue asparagine 477 is glycosylated (N-linked (GlcNAc...) asparagine). The N-linked (GlcNAc...) asparagine glycan is linked to asparagine 584. 9 cysteine pairs are disulfide-bonded: cysteine 585–cysteine 608, cysteine 592–cysteine 606, cysteine 600–cysteine 611, cysteine 613–cysteine 623, cysteine 626–cysteine 629, cysteine 633–cysteine 680, cysteine 639–cysteine 660, cysteine 642–cysteine 656, and cysteine 688–cysteine 712. An N-linked (GlcNAc...) asparagine glycan is attached at asparagine 679. Residues 718–738 (ILVVLLSVMGAILLIGLATLL) traverse the membrane as a helical segment. Topologically, residues 739–787 (IWKLLITIHDRKEFAKFEEERARAKWDTANNPLYKEATSTFTNITYRGT) are cytoplasmic. Threonine 766 carries the phosphothreonine modification. A Phosphotyrosine modification is found at tyrosine 772. The LIR signature appears at 776–782 (TSTFTNI). The residue at position 778 (threonine 778) is a Phosphothreonine. Phosphotyrosine is present on tyrosine 784.

This sequence belongs to the integrin beta chain family. Heterodimer of an alpha and a beta subunit. Beta-3 (ITGB3) associates with either alpha-IIB (ITGA2B) or alpha-V (ITGAV). Interacts with FLNB and COMP. Interacts with PDIA6 following platelet stimulation. Interacts with SYK; upon activation by ITGB3 promotes platelet adhesion. Interacts with MYO10. Interacts with DAB2. Interacts with FERMT2. Integrin ITGAV:ITGB3 interacts with FBLN5 (via N-terminus). Interacts with EMP2; regulates the levels of the heterodimer ITGA5:ITGB3 integrin expression on the plasma membrane. ITGAV:ITGB3 interacts with CCN3. ITGAV:ITGB3 and ITGA2B:ITGB3 interact with SELP (via C-type lectin domain); the interaction mediates cell-cell interaction and adhesion. ITGAV:ITGB3 interacts with AGRA2. ITGAV:ITGB3 is found in a ternary complex with CX3CR1 and CX3CL1. ITGAV:ITGB3 is found in a ternary complex with NRG1 and ERBB3. ITGAV:ITGB3 is found in a ternary complex with FGF1 and FGFR1. ITGAV:ITGB3 interacts with FGF2; it is likely that FGF2 can simultaneously bind ITGAV:ITGB3 and FGF receptors. ITGAV:ITGB3 binds to IL1B. ITGAV:ITGB3 is found in a ternary complex with IGF1 and IGF1R. ITGAV:ITGB3 interacts with IGF2. ITGAV:ITGB3 interacts with FBN1. ITGAV:ITGB3 interacts with CD9, CD81 and CD151 (via second extracellular domain). Interacts (via the allosteric site (site 2)) with CXCL12 in a CXCR4-independent manner. Interacts with MXRA8/DICAM; the interaction inhibits ITGAV:ITGB3 heterodimer formation. ITGAV:ITGB3 interacts with PTN. Forms a complex with PTPRZ1 and PTN that stimulates endothelial cell migration through ITGB3 Tyr-772 phosphorylation. ITGAV:ITGB3 interacts with SLC6A4. Interacts with SLC6A4 (via C-terminus); this interaction regulates SLC6A4 trafficking. ITGA2B:ITGB3 interacts with PPIA/CYPA; the interaction is ROS and PPIase activity-dependent and is increased in the presence of thrombin. Interacts with tensin TNS3; TNS3 also interacts with PEAK1, thus acting as an adapter molecule to bridge the association of PEAK1 with ITGB3. Interacts with TM4SF19. Phosphorylated on tyrosine residues in response to thrombin-induced platelet aggregation. Probably involved in outside-in signaling.

Its subcellular location is the cell membrane. The protein localises to the cell projection. The protein resides in the lamellipodium membrane. It is found in the cell junction. It localises to the focal adhesion. Its subcellular location is the postsynaptic cell membrane. The protein localises to the synapse. In terms of biological role, integrin alpha-V/beta-3 (ITGAV:ITGB3) is a receptor for cytotactin, fibronectin, laminin, matrix metalloproteinase-2, osteopontin, osteomodulin, prothrombin, thrombospondin, vitronectin and von Willebrand factor. Integrin alpha-IIB/beta-3 (ITGA2B:ITGB3) is a receptor for fibronectin, fibrinogen, plasminogen, prothrombin, thrombospondin and vitronectin. Integrins alpha-IIB/beta-3 and alpha-V/beta-3 recognize the sequence R-G-D in a wide array of ligands. Integrin alpha-IIB/beta-3 recognizes the sequence H-H-L-G-G-G-A-K-Q-A-G-D-V in fibrinogen gamma chain. Following activation integrin alpha-IIB/beta-3 brings about platelet/platelet interaction through binding of soluble fibrinogen. This step leads to rapid platelet aggregation which physically plugs ruptured endothelial surfaces. Fibrinogen binding enhances SELP expression in activated platelets. ITGAV:ITGB3 binds to fractalkine (CX3CL1) and acts as its coreceptor in CX3CR1-dependent fractalkine signaling. ITGAV:ITGB3 binds to NRG1 (via EGF domain) and this binding is essential for NRG1-ERBB signaling. ITGAV:ITGB3 binds to FGF1 and this binding is essential for FGF1 signaling. ITGAV:ITGB3 binds to FGF2 and this binding is essential for FGF2 signaling. ITGAV:ITGB3 binds to IGF1 and this binding is essential for IGF1 signaling. ITGAV:ITGB3 binds to IGF2 and this binding is essential for IGF2 signaling. ITGAV:ITGB3 binds to IL1B and this binding is essential for IL1B signaling. ITGAV:ITGB3 binds to PLA2G2A via a site (site 2) which is distinct from the classical ligand-binding site (site 1) and this induces integrin conformational changes and enhanced ligand binding to site 1. ITGAV:ITGB3 acts as a receptor for fibrillin-1 (FBN1) and mediates R-G-D-dependent cell adhesion to FBN1. In brain, plays a role in synaptic transmission and plasticity. Involved in the regulation of the serotonin neurotransmission, is required to localize to specific compartments within the synapse the serotonin receptor SLC6A4 and for an appropriate reuptake of serotonin. Controls excitatory synaptic strength by regulating GRIA2-containing AMPAR endocytosis, which affects AMPAR abundance and composition. ITGAV:ITGB3 acts as a receptor for CD40LG. ITGAV:ITGB3 acts as a receptor for IBSP and promotes cell adhesion and migration to IBSP. The protein is Integrin beta-3 of Rattus norvegicus (Rat).